Here is a 536-residue protein sequence, read N- to C-terminus: UDP-glucuronosyltransferase 2A2 (536 aa).

Residues 1–15 (MVSIRDFTMPKKFVQ) lie on the Cytoplasmic side of the membrane. A helical transmembrane segment spans residues 16-36 (MLVFNLTLTEVVLSGNVLIWP). Residues 37–500 (TDGSHWLNIK…TWFQYHSLDV (464 aa)) lie on the Lumenal side of the membrane. 3 N-linked (GlcNAc...) asparagine glycosylation sites follow: Asn-58, Asn-322, and Asn-356. Residues 501–521 (IGFLLVCVTTAIFLVIQCCLF) traverse the membrane as a helical segment. Residues 522–536 (SCQKFGKIGKKKKRE) are Cytoplasmic-facing.

This sequence belongs to the UDP-glycosyltransferase family. In terms of tissue distribution, mainly expressed in the nasal mucosa.

It is found in the endoplasmic reticulum membrane. It catalyses the reaction glucuronate acceptor + UDP-alpha-D-glucuronate = acceptor beta-D-glucuronoside + UDP + H(+). The enzyme catalyses 17alpha-estradiol + UDP-alpha-D-glucuronate = 17alpha-estradiol 3-O-(beta-D-glucuronate) + UDP + H(+). The catalysed reaction is 17beta-estradiol + UDP-alpha-D-glucuronate = 17beta-estradiol 3-O-(beta-D-glucuronate) + UDP + H(+). It carries out the reaction chenodeoxycholate + UDP-alpha-D-glucuronate = chenodeoxycholoyl-24-O-(beta-D-glucuronate) + UDP. It catalyses the reaction lithocholate + UDP-alpha-D-glucuronate = lithocholoyl-24-O-(beta-D-glucuronate) + UDP. The enzyme catalyses deoxycholate + UDP-alpha-D-glucuronate = deoxycholoyl-24-O-(beta-D-glucuronate) + UDP. The catalysed reaction is hyocholate + UDP-alpha-D-glucuronate = hyocholoyl-24-O-(beta-D-glucuronate) + UDP. It carries out the reaction hyodeoxycholate + UDP-alpha-D-glucuronate = hyodeoxycholate 6-O-(beta-D-glucuronate) + UDP + H(+). Its function is as follows. UDP-glucuronosyltransferase (UGT) that catalyzes phase II biotransformation reactions in which lipophilic substrates are conjugated with glucuronic acid to increase the metabolite's water solubility, thereby facilitating excretion into either the urine or bile. Essential for the elimination and detoxification of drugs, xenobiotics and endogenous compounds. Catalyzes the glucuronidation of endogenous estrogen hormone estradiol. Contributes to bile acid (BA) detoxification by catalyzing the glucuronidation of BA substrates, which are natural detergents for dietary lipids absorption. Shows a potential role in detoxification of toxic waste compounds in the amniotic fluid before birth, and air-born chemical after birth. The protein is UDP-glucuronosyltransferase 2A2 of Homo sapiens (Human).